A 547-amino-acid chain; its full sequence is MFS-type transporter M6 (547 aa).

The tract at residues 1-45 is disordered; it reads MHRRRRDNLMTPAEMVASMKPPQSLSTEDDDGSRRDSESSADVLK. Residues 81–101 form a helical membrane-spanning segment; the sequence is VLVVASFAAAISPFSTSTYYP. Asn-118 carries an N-linked (GlcNAc...) asparagine glycan. A helical membrane pass occupies residues 146–166; that stretch reads PMFLVCFAIYFVANVGLALQN. The N-linked (GlcNAc...) asparagine glycan is linked to Asn-167. The next 2 helical transmembrane spans lie at 206 to 226 and 236 to 256; these read LIYATLGSTLGPFLGPVIGGL and VFWFLLCMGTVFALLIFIFFG. N-linked (GlcNAc...) asparagine glycosylation is present at Asn-274. The next 5 membrane-spanning stretches (helical) occupy residues 317–337, 347–367, 407–427, 432–452, and 469–489; these read FILSVSGGLLYAGYSSVTSVL, YDAVQVGLCYLPVGFGSLLAY, LGFVFPMILVCSVLLVAYGWQ, APLAPILVTMFLIAIILTGVM, and AVGAAMNLTRLLLGAGAVAVV. Residue Asn-493 is glycosylated (N-linked (GlcNAc...) asparagine). Residues 496–516 form a helical membrane-spanning segment; sequence AGIGWTATVTAGLWVLMMPTL.

It belongs to the major facilitator superfamily. CAR1 family.

Its subcellular location is the membrane. In terms of biological role, MFS-type transporter; part of the gene cluster that mediates the biosynthesis of squalestatin S1 (SQS1, also known as zaragozic acid A), a heavily oxidized fungal polyketide that offers potent cholesterol lowering activity by targeting squalene synthase (SS). The polypeptide is MFS-type transporter M6 (Phoma sp. (strain ATCC 20986 / MF5453)).